We begin with the raw amino-acid sequence, 313 residues long: MIKRKKIALIGAGNIGGMIAYLIRLKNLGDVVLLDVNDGIAKGKALDMAESSPVGKYNGEILGTNNYADIEGADAIVVTAGITRKPGMSREDLINTNVNIIKEVADNIGKYAPNAFVVVVTNPLDVMVFAMHKYSKLSSNMVVGMAGILDSARFSYFIAKELNVSVDNVNSLVLGGHGDLMLPLVKYSSVAGISIADLIKIDLITQDKVDAIIERTRKGGEEIVSLLKIGSAYYAPAESALLMIDSYLNDRRLILPCSVYLKGEYGVSNLFVGVPVIIGRNGVEKIIELELTEQEKNIFDNSVKLIKNLVSNV.

NAD(+)-binding positions include 11-16 and D35; that span reads GAGNIG. R84 and R90 together coordinate substrate. Residues N97 and 120-122 each bind NAD(+); that span reads VTN. 2 residues coordinate substrate: N122 and R153. H177 serves as the catalytic Proton acceptor.

It belongs to the LDH/MDH superfamily. MDH type 3 family.

It catalyses the reaction (S)-malate + NAD(+) = oxaloacetate + NADH + H(+). Catalyzes the reversible oxidation of malate to oxaloacetate. This is Malate dehydrogenase from Ehrlichia canis (strain Jake).